A 289-amino-acid chain; its full sequence is tRNA (adenine(58)-N(1))-methyltransferase catalytic subunit TRMT61A (289 aa).

At Ser2 the chain carries N-acetylserine. Substrate is bound by residues 20 to 22, 35 to 42, 64 to 65, 85 to 89, and 110 to 117; these read LGH, QTQTRHGV, GW, QILYS, and SGTGSGSV. S-adenosyl-L-methionine-binding positions include Leu87, 114–116, Glu135, Arg140, 163–164, and Asp181; these read SGS and DV. Residues 180-183 and 205-212 each bind substrate; these read LDIP and SFSPCIEQ. The disordered stretch occupies residues 245–272; the sequence is LPPPDLGTGTDGPAGSDTSPFRSGTPMK. The segment covering 250–259 has biased composition (low complexity); it reads LGTGTDGPAG. Ser263 is modified (phosphoserine). Thr278 serves as a coordination point for substrate.

Belongs to the class I-like SAM-binding methyltransferase superfamily. TRM61 family. In terms of assembly, heterotetramer; composed of two copies of TRMT6 and two copies of TRMT61A.

Its subcellular location is the nucleus. It catalyses the reaction adenosine(58) in tRNA + S-adenosyl-L-methionine = N(1)-methyladenosine(58) in tRNA + S-adenosyl-L-homocysteine + H(+). The catalysed reaction is an adenosine in mRNA + S-adenosyl-L-methionine = an N(1)-methyladenosine in mRNA + S-adenosyl-L-homocysteine + H(+). Functionally, catalytic subunit of tRNA (adenine-N(1)-)-methyltransferase, which catalyzes the formation of N(1)-methyladenine at position 58 (m1A58) in initiator methionyl-tRNA. Catalytic subunit of mRNA N(1)-methyltransferase complex, which mediates methylation of adenosine residues at the N(1) position of a small subset of mRNAs: N(1) methylation takes place in tRNA T-loop-like structures of mRNAs and is only present at low stoichiometries. This chain is tRNA (adenine(58)-N(1))-methyltransferase catalytic subunit TRMT61A (TRMT61A), found in Homo sapiens (Human).